The sequence spans 88 residues: Small ribosomal subunit protein bS18 (88 aa).

The tract at residues 1–22 (MSTKNAKPKKEAQRRPSRKAKV) is disordered.

The protein belongs to the bacterial ribosomal protein bS18 family. In terms of assembly, part of the 30S ribosomal subunit. Forms a tight heterodimer with protein bS6.

Its function is as follows. Binds as a heterodimer with protein bS6 to the central domain of the 16S rRNA, where it helps stabilize the platform of the 30S subunit. The protein is Small ribosomal subunit protein bS18 (rpsR) of Thermus thermophilus (strain ATCC BAA-163 / DSM 7039 / HB27).